We begin with the raw amino-acid sequence, 505 residues long: Glycerol kinase (505 aa).

ADP is bound at residue Thr14. Thr14, Thr15, and Ser16 together coordinate ATP. Thr14 lines the sn-glycerol 3-phosphate pocket. Position 18 (Arg18) interacts with ADP. Sn-glycerol 3-phosphate is bound by residues Arg84, Glu85, Tyr136, and Asp246. Glycerol-binding residues include Arg84, Glu85, Tyr136, Asp246, and Gln247. ADP contacts are provided by Thr268 and Gly311. ATP contacts are provided by Thr268, Gly311, Gln315, and Gly412. ADP is bound by residues Gly412 and Asn416.

This sequence belongs to the FGGY kinase family.

It carries out the reaction glycerol + ATP = sn-glycerol 3-phosphate + ADP + H(+). The protein operates within polyol metabolism; glycerol degradation via glycerol kinase pathway; sn-glycerol 3-phosphate from glycerol: step 1/1. Its activity is regulated as follows. Inhibited by fructose 1,6-bisphosphate (FBP). Its function is as follows. Key enzyme in the regulation of glycerol uptake and metabolism. Catalyzes the phosphorylation of glycerol to yield sn-glycerol 3-phosphate. The polypeptide is Glycerol kinase (Vibrio vulnificus (strain CMCP6)).